A 188-amino-acid chain; its full sequence is Ribosome-recycling factor (188 aa).

This sequence belongs to the RRF family.

It localises to the cytoplasm. Its function is as follows. Responsible for the release of ribosomes from messenger RNA at the termination of protein biosynthesis. May increase the efficiency of translation by recycling ribosomes from one round of translation to another. This Dinoroseobacter shibae (strain DSM 16493 / NCIMB 14021 / DFL 12) protein is Ribosome-recycling factor.